The primary structure comprises 447 residues: Ribosomal protein uS12 methylthiotransferase RimO (447 aa).

Residues 6–122 (EKVSMVSLGC…IAEIIEEKSS (117 aa)) form the MTTase N-terminal domain. Residues cysteine 15, cysteine 51, cysteine 85, cysteine 160, cysteine 164, and cysteine 167 each coordinate [4Fe-4S] cluster. Positions 146–376 (SSPAYTAYLK…MKAQARVSFK (231 aa)) constitute a Radical SAM core domain. Positions 379–447 (RRLIDTEEQV…DYDLIGEIIS (69 aa)) constitute a TRAM domain.

Belongs to the methylthiotransferase family. RimO subfamily. [4Fe-4S] cluster is required as a cofactor.

The protein localises to the cytoplasm. It catalyses the reaction L-aspartate(89)-[ribosomal protein uS12]-hydrogen + (sulfur carrier)-SH + AH2 + 2 S-adenosyl-L-methionine = 3-methylsulfanyl-L-aspartate(89)-[ribosomal protein uS12]-hydrogen + (sulfur carrier)-H + 5'-deoxyadenosine + L-methionine + A + S-adenosyl-L-homocysteine + 2 H(+). Its function is as follows. Catalyzes the methylthiolation of an aspartic acid residue of ribosomal protein uS12. The sequence is that of Ribosomal protein uS12 methylthiotransferase RimO from Geobacter sulfurreducens (strain ATCC 51573 / DSM 12127 / PCA).